The primary structure comprises 288 residues: Homoserine kinase (288 aa).

78–88 (PLARGLGSSSS) lines the ATP pocket.

It belongs to the GHMP kinase family. Homoserine kinase subfamily.

It localises to the cytoplasm. It catalyses the reaction L-homoserine + ATP = O-phospho-L-homoserine + ADP + H(+). It participates in amino-acid biosynthesis; L-threonine biosynthesis; L-threonine from L-aspartate: step 4/5. Functionally, catalyzes the ATP-dependent phosphorylation of L-homoserine to L-homoserine phosphate. This chain is Homoserine kinase, found in Streptococcus agalactiae serotype V (strain ATCC BAA-611 / 2603 V/R).